A 341-amino-acid polypeptide reads, in one-letter code: UDP-3-O-acylglucosamine N-acyltransferase (341 aa).

Residue His242 is the Proton acceptor of the active site.

Belongs to the transferase hexapeptide repeat family. LpxD subfamily. As to quaternary structure, homotrimer.

It catalyses the reaction a UDP-3-O-[(3R)-3-hydroxyacyl]-alpha-D-glucosamine + a (3R)-hydroxyacyl-[ACP] = a UDP-2-N,3-O-bis[(3R)-3-hydroxyacyl]-alpha-D-glucosamine + holo-[ACP] + H(+). It participates in bacterial outer membrane biogenesis; LPS lipid A biosynthesis. In terms of biological role, catalyzes the N-acylation of UDP-3-O-acylglucosamine using 3-hydroxyacyl-ACP as the acyl donor. Is involved in the biosynthesis of lipid A, a phosphorylated glycolipid that anchors the lipopolysaccharide to the outer membrane of the cell. This Haemophilus influenzae (strain 86-028NP) protein is UDP-3-O-acylglucosamine N-acyltransferase.